The following is a 453-amino-acid chain: MARKAVSRKRKAPASPGAGSDAQGQQFGWDHTLHKRKRLPPVKRSLVYYLKNREVRLQNETSYSRVLHGYAAQQLPSLLKEREFHLGTLNKVFASQWLNHRQVVCGTKCNTLFVVDVQTSQITKIPILKDREPGGVTQQGCGIHAIELNPSRTLLATGGDNPNSLAIYRLPTLDPVCVGDDGHKDWIFSIAWISDTMAVSGSRDGSMGLWEVTDDVLTKSDARHNVSRVPVYAHITHKALKDIPKEDTNPDNCKVRALAFNSKNKELGAVSLDGYFHLWKAENTLSKLLSTKLPYCRENVCLAYGSEWSVYAVGSQAHVSFLDPRQPSYNVKSVCSRERGSGIRSVSFYEHIITVGTGQGSLLFYDIRAQRFLEERLSACYGSKPRLAGENLKLTTGKGWLNHDETWRNYFSDIDFFPNAVYTHCYDSSGTKLFVAGGPLPSGLHGNYAGLWS.

Residues 1–12 show a composition bias toward basic residues; it reads MARKAVSRKRKA. The disordered stretch occupies residues 1–26; sequence MARKAVSRKRKAPASPGAGSDAQGQQ. The segment at 1-38 is required for nuclear location and interaction with MOV10; the sequence is MARKAVSRKRKAPASPGAGSDAQGQQFGWDHTLHKRKR. Ser15 carries the post-translational modification Phosphoserine. WD repeat units lie at residues 138–178, 182–220, 250–289, and 338–375; these read QQGC…PVCV, GHKD…LTKS, PDNC…SKLL, and ERGS…FLEE.

This sequence belongs to the WD repeat DCAF12 family. As to quaternary structure, component of the DCX(DCAF12) E3 ubiquitin ligase complex, at least composed of CUL4 (CUL4A or CUL4B), DDB1, DCAF12 and RBX1.

The protein resides in the cytoplasm. It is found in the cytoskeleton. The protein localises to the microtubule organizing center. It localises to the centrosome. Its subcellular location is the nucleus. The protein operates within protein modification; protein ubiquitination. Functionally, substrate-recognition component of a DCX (DDB1-CUL4-X-box) E3 ubiquitin-protein ligase complex of the DesCEND (destruction via C-end degrons) pathway, which recognizes a C-degron located at the extreme C terminus of target proteins, leading to their ubiquitination and degradation. The C-degron recognized by the DesCEND pathway is usually a motif of less than ten residues and can be present in full-length proteins, truncated proteins or proteolytically cleaved forms. The DCX(DCAF12) complex specifically recognizes proteins with a diglutamate (Glu-Glu) at the C-terminus, such as MAGEA3, MAGEA6 and CCT5, leading to their ubiquitination and degradation. Ubiquitination of MAGEA3, MAGEA6 by DCX(DCAF12) complex is required for starvation-induced autophagy. Also directly recognizes the C-terminal glutamate-leucine (Glu-Leu) degron as an alternative degron in proteins such as MOV10, leading to their ubiquitination and degradation. Controls the protein level of MOV10 during spermatogenesis and in T cells, especially after their activation. In Macaca fascicularis (Crab-eating macaque), this protein is DDB1- and CUL4-associated factor 12 (DCAF12).